The primary structure comprises 201 residues: MQAFTAHSGLAVAIDSANIDTDQIIPKQFLSKVTRDGFGVHLFHDWRYLDDAGEKPNPEFVLNQSRYKGASILLAQENFGCGSSREHAPWALADFGLRVVIAPSFADIFYGNAINNGLLPVVLTQAQVQQLMDEVQGELGAQVSVDLQLLRVISPSGAEFPFSLVESARHKLLNGLDAVGETLTHGQAISAYEANIPAWLA.

Belongs to the LeuD family. LeuD type 1 subfamily. In terms of assembly, heterodimer of LeuC and LeuD.

The catalysed reaction is (2R,3S)-3-isopropylmalate = (2S)-2-isopropylmalate. The protein operates within amino-acid biosynthesis; L-leucine biosynthesis; L-leucine from 3-methyl-2-oxobutanoate: step 2/4. Functionally, catalyzes the isomerization between 2-isopropylmalate and 3-isopropylmalate, via the formation of 2-isopropylmaleate. This chain is 3-isopropylmalate dehydratase small subunit, found in Shewanella denitrificans (strain OS217 / ATCC BAA-1090 / DSM 15013).